The following is a 439-amino-acid chain: AP-2 complex subunit mu (439 aa).

The 267-residue stretch at 172-438 folds into the MHD domain; the sequence is RNELYIDVVE…LTKAGTYQNR (267 aa).

This sequence belongs to the adaptor complexes medium subunit family. As to quaternary structure, adaptor protein complex 2 (AP-2) is a heterotetramer composed of two large adaptins (alpha-type and beta-type subunits), a medium adaptin (mu-type subunit AP50) and a small adaptin (sigma-type subunit AP17). In terms of processing, phosphorylated.

It localises to the cell membrane. Its subcellular location is the membrane. The protein localises to the coated pit. Functionally, component of the adaptor complexes which link clathrin to receptors in coated vesicles. Clathrin-associated protein complexes are believed to interact with the cytoplasmic tails of membrane proteins, leading to their selection and concentration. AP50 is a subunit of the plasma membrane adaptor. This is AP-2 complex subunit mu (apm2) from Dictyostelium discoideum (Social amoeba).